A 397-amino-acid polypeptide reads, in one-letter code: Glia-derived nexin (397 aa).

The N-terminal stretch at 1 to 19 (MNWHFPFFILTTVTLSSVY) is a signal peptide. Asparagine 159 carries an N-linked (GlcNAc...) asparagine glycan.

It belongs to the serpin family.

Its subcellular location is the secreted. The protein resides in the extracellular space. In terms of biological role, serine protease inhibitor with activity toward thrombin, trypsin, and urokinase. Promotes neurite extension by inhibiting thrombin. Binds heparin. The polypeptide is Glia-derived nexin (Serpine2) (Rattus norvegicus (Rat)).